A 347-amino-acid polypeptide reads, in one-letter code: DNA primase small subunit PriS (347 aa).

Catalysis depends on residues D95 and D97. Residues C106, H108, C114, and C117 each contribute to the Zn(2+) site. The short motif at 106–117 (CNHEPGTVCPIC) is the Zinc knuckle motif element. D280 is an active-site residue.

The protein belongs to the eukaryotic-type primase small subunit family. As to quaternary structure, heterodimer of a small subunit (PriS) and a large subunit (PriL). Both participate in formation of the active center, but the ATP-binding site is exclusively located on the small subunit. Mg(2+) serves as cofactor. Requires Mn(2+) as cofactor.

Functionally, catalytic subunit of DNA primase, an RNA polymerase that catalyzes the synthesis of short RNA molecules used as primers for DNA polymerase during DNA replication. The small subunit contains the primase catalytic core and has DNA synthesis activity on its own. Binding to the large subunit stabilizes and modulates the activity, increasing the rate of DNA synthesis while decreasing the length of the DNA fragments, and conferring RNA synthesis capability. The DNA polymerase activity may enable DNA primase to also catalyze primer extension after primer synthesis. May also play a role in DNA repair. The sequence is that of DNA primase small subunit PriS from Pyrococcus furiosus (strain ATCC 43587 / DSM 3638 / JCM 8422 / Vc1).